The sequence spans 436 residues: Trigger factor (436 aa).

Residues 161–246 form the PPIase FKBP-type domain; the sequence is GDQVIVDFDG…VREVKEPTLP (86 aa).

The protein belongs to the FKBP-type PPIase family. Tig subfamily.

The protein localises to the cytoplasm. The catalysed reaction is [protein]-peptidylproline (omega=180) = [protein]-peptidylproline (omega=0). Functionally, involved in protein export. Acts as a chaperone by maintaining the newly synthesized protein in an open conformation. Functions as a peptidyl-prolyl cis-trans isomerase. This is Trigger factor from Thioalkalivibrio sulfidiphilus (strain HL-EbGR7).